Consider the following 177-residue polypeptide: UPF0340 protein STH78 (177 aa).

This sequence belongs to the UPF0340 family.

This Symbiobacterium thermophilum (strain DSM 24528 / JCM 14929 / IAM 14863 / T) protein is UPF0340 protein STH78.